Reading from the N-terminus, the 238-residue chain is Carboxymethylenebutenolidase (238 aa).

Residues Cys123, Asp171, and His201 contribute to the active site.

This sequence belongs to the dienelactone hydrolase family. In terms of assembly, monomer.

The catalysed reaction is 2-(5-oxo-2,5-dihydrofuran-2-ylidene)acetate + H2O = 4-oxohex-2-enedioate + H(+). It functions in the pathway aromatic compound metabolism; 3-chlorocatechol degradation. Its function is as follows. Ring cleavage of cyclic ester dienelactone to produce maleylacetate. The polypeptide is Carboxymethylenebutenolidase (tcbE) (Pseudomonas sp. (strain P51)).